Reading from the N-terminus, the 267-residue chain is Shikimate dehydrogenase (NADP(+)) (267 aa).

Residues 14 to 16 (SLS) and Thr-61 each bind shikimate. Catalysis depends on Lys-65, which acts as the Proton acceptor. The shikimate site is built by Asn-86 and Asp-101. Residues 126–130 (GAGGA), 150–155 (NRTHSK), and Leu-213 contribute to the NADP(+) site. Tyr-215 contacts shikimate. Gly-236 serves as a coordination point for NADP(+).

It belongs to the shikimate dehydrogenase family. In terms of assembly, homodimer.

The catalysed reaction is shikimate + NADP(+) = 3-dehydroshikimate + NADPH + H(+). The protein operates within metabolic intermediate biosynthesis; chorismate biosynthesis; chorismate from D-erythrose 4-phosphate and phosphoenolpyruvate: step 4/7. Involved in the biosynthesis of the chorismate, which leads to the biosynthesis of aromatic amino acids. Catalyzes the reversible NADPH linked reduction of 3-dehydroshikimate (DHSA) to yield shikimate (SA). The sequence is that of Shikimate dehydrogenase (NADP(+)) from Vesicomyosocius okutanii subsp. Calyptogena okutanii (strain HA).